The primary structure comprises 630 residues: MEVKGQLISSPTFNAPAALFGEAAPQVKSERLRGLLDRQRTLQEALSLKLQELRKVCLQEAELTGQLPPECPLEPGERPQLVRRRPPTARAYPPPHPNQAHHSLCPAEELALEALEREVSVQQQIAAAARRLALAPDLSTEQRRRRRQVQADALRRLHELEEQLRDVRARLGLPVLPLPQPLPLSTGSVITTQGVCLGMRLAQLSQEDVVLHSESSSLSESGASHDNEEPHGCFSLAERPSPPKAWDQLRAVSGGSPERRTPWKPPPSDLYGDLKSRRNSVASPTSPTRSLPRSASSFEGRSVPATPVLTRGAGPQLCKPEGLHSRQWSGSQDSQMGFPRADPASDRASLFVARTRRSNSSEALLVDRAAGGGAGSPPAPLAPSASGPPVCKSSEVLYERPQPTPAFSSRTAGPPDPPRAARPSSAAPASRGAPRLPPVCGDFLLDYSLDRGLPRSGGGTGWGELPPAAEVPGPLSRRDGLLTMLPGPPPVYAADSNSPLLRTKDPHTRATRTKPCGLPPEAAEGPEVHPNPLLWMPPPTRIPSAGERSGHKNLALEGLRDWYIRNSGLAAGPQRRPVLPSVGPPHPPFLHARCYEVGQALYGAPSQAPLPHSRSFTAPPVSGRYGGCFY.

The tract at residues 31–70 is involved in CYTH2-binding; sequence RLRGLLDRQRTLQEALSLKLQELRKVCLQEAELTGQLPPE. A coiled-coil region spans residues 109–173; it reads ELALEALERE…LRDVRARLGL (65 aa). Composition is skewed to low complexity over residues 212-222 and 282-297; these read HSESSSLSESG and ASPTSPTRSLPRSASS. Disordered stretches follow at residues 212-435 and 457-534; these read HSES…GAPR and GGGT…NPLL. The segment covering 326–335 has biased composition (polar residues); that stretch reads RQWSGSQDSQ. A phosphoserine mark is found at S358 and S360. Positions 421–434 are enriched in low complexity; sequence ARPSSAAPASRGAP. R435 carries the post-translational modification Omega-N-methylarginine.

As to quaternary structure, interacts with NIN and CEP170; leading to recruit them to centrosomes. Directly interacts with CYTH2; this interaction stabilizes CCDC120, possibly by preventing ubiquitination. Post-translationally, ubiquitinated; interaction with CYTH2 may prevent ubiquitination.

Its subcellular location is the cytoplasm. It localises to the cytoskeleton. The protein localises to the microtubule organizing center. The protein resides in the centrosome. It is found in the centriole. Its subcellular location is the cell projection. It localises to the neuron projection. The protein localises to the growth cone. The protein resides in the endosome. Functionally, centriolar protein required for centriole subdistal appendage assembly and microtubule anchoring in interphase cells. Together with CCDC68, cooperate with subdistal appendage components ODF2, NIN and CEP170 for hierarchical subdistal appendage assembly. Recruits NIN and CEP170 to centrosomes. Also required for neurite growth. Localizes CYTH2 to vesicles to allow its transport along neurites, and subsequent ARF6 activation and neurite growth. This Homo sapiens (Human) protein is Coiled-coil domain-containing protein 120 (CCDC120).